We begin with the raw amino-acid sequence, 475 residues long: Putative response regulator NtrX-like (475 aa).

Residues 5 to 121 (DVLIVDDEES…KLVILLKRAC (117 aa)) form the Response regulatory domain. D54 is subject to 4-aspartylphosphate. The Sigma-54 factor interaction domain occupies 143-369 (LVGGCSVTLK…LRNVVEWTLI (227 aa)). Residues 171 to 178 (GKVGSGKE) and 232 to 241 (ANNGTLYIDE) contribute to the ATP site.

In terms of biological role, member of the two-component regulatory system RF_0895/RF_0427. The protein is Putative response regulator NtrX-like of Rickettsia felis (strain ATCC VR-1525 / URRWXCal2) (Rickettsia azadi).